The following is a 202-amino-acid chain: MGCCGCSGGCGSGCGGCGSGCGGCGSGCGGYGSGCGGCGSSCCVPVCCCKPVCCCVPACSCSSCGSCGGSKGDCGSCGGSKGGCGSCGGSKGGCGSCGGSKGGCGSCGGSKGGCGSCGGSKGGCGSCGGSKGGCGSCGCSQCNCCKPCCCSSGCGSCCQSSCCNPCCCQSSCCVPVCCQSSCCKPCCCQSSCCVPVCCQCKI.

Repeat copies occupy residues 48–51 (CCKP), 54–57 (CCVP), 144–147 (CCKP), 162–165 (CCNP), 172–175 (CCVP), 182–185 (CCKP), and 192–195 (CCVP). The 7 X 4 AA repeats of C-C-X-P stretch occupies residues 48-195 (CCKPVCCCVP…CCCQSSCCVP (148 aa)).

This sequence belongs to the KRTAP type 5 family. As to quaternary structure, interacts with hair keratins. As to expression, expressed in hair root but not in skin. Expressed also in brain and skeletal muscle.

Functionally, in the hair cortex, hair keratin intermediate filaments are embedded in an interfilamentous matrix, consisting of hair keratin-associated protein (KRTAP), which are essential for the formation of a rigid and resistant hair shaft through their extensive disulfide bond cross-linking with abundant cysteine residues of hair keratins. The matrix proteins include the high-sulfur and high-glycine-tyrosine keratins. This Homo sapiens (Human) protein is Keratin-associated protein 5-10 (KRTAP5-10).